Reading from the N-terminus, the 172-residue chain is MRFTPAIVIAAFCSLAVAAPAAKAIARSPSEAVEDYVIPIDKKRGEAVEDYVIPIDKKRGEAVEDYVIPIDKRGEAVEDYVIPIDKRGEAVEDYVIPIDKKRGEAVEDYVIPIDKRGEAVEDYVIPIDRKRGEAVEDYVIPIDKRGEAVEDYVIPIDKRGEAVEDYVIPIDK.

The signal sequence occupies residues 1-18; sequence MRFTPAIVIAAFCSLAVA. 11 propeptides span residues 19–35, 42–50, 57–65, 72–79, 86–93, 100–108, 115–122, 129–137, 144–151, 158–165, and K172; these read APAAKAIARSPSEAVED, KKRGEAVED, KRGEAVED, and RKRGEAVED.

Post-translationally, phomA is processed by several endopeptidases including kexin proteases as well as the cluster-specific S41 family peptidase phomP1 and the oligopeptidase phomG to produce 10 identical copies of the hexapeptide Tyr-Val-Ile-Pro-Ile-Asp, that is further modified to yield phomapsins. The timing and order of proteolysis of the phomA precursor and PTMs are still unknown. Two tyrosinase-like enzymes, phomQ1 and phomQ2, catalyze the chlorination and hydroxylation of Tyr, respectively. PhomYb, is proposed to be involved in the construction of the macrocyclic structure. The other 4 ustYa family proteins may be involved in PTMs that generate the unique structure of phomopsin A. PhomYa is required for the hydroxylation of C-beta of Tyr. PhomYc, phomYd, and phomYe are responsible for the biosynthesis of 2,3-dehydroisoleucine (dIle), 2,3-dehydroaspartic acid (dAsp), and 3,4-dehydroproline (dPro), respectively. While dIle formation by phomYc is indispensable for the installation of dAsp by phomYd, the order of the other PTMs have not been elucidated yet. Most of the biosynthetic enzymes likely have broad substrate specificity, and thus, there might be a metabolic grid from a precursor to phomopsin A. The enzyme(s) responsible for the biosynthesis of 3,4-dehydrovaline (dVal) have also not been identified yet. Finally, phomM acts as an S-adenosylmethionine-dependent alpha-N-methyltransferase that catalyzes two successive N-methylation reactions, converting N-desmethyl-phomopsin A to phomopsin A and phomopsin A further to an N,N-dimethylated congener called phomopsin E.

It participates in mycotoxin biosynthesis. Its function is as follows. Ribosomally synthesized cyclic peptide phomopsin precursor; part of the gene cluster that mediates the biosynthesis of the phomopsins, a group of hexapeptide mycotoxins which infects lupins and causes lupinosis disease in livestock. The phomA translated product contains a 10-fold repeated peptide embedding the hexapeptide Tyr-Val-Ile-Pro-Ile-Asp, that is converted into phomapsins. After being excised from the precursor peptide by kexin proteases, the core peptides are cyclized and modified post-translationally by enzymes encoded within the corresponding gene cluster. The chain is Ribosomally synthesized cyclic peptide phomopsin precursor phomA from Diaporthe leptostromiformis (Lupinosis disease fungus).